The sequence spans 217 residues: 3-demethoxyubiquinol 3-hydroxylase (217 aa).

Fe cation contacts are provided by E66, E96, H99, E148, E180, and H183.

Belongs to the COQ7 family. Fe cation is required as a cofactor.

The protein localises to the cell membrane. The enzyme catalyses a 5-methoxy-2-methyl-3-(all-trans-polyprenyl)benzene-1,4-diol + AH2 + O2 = a 3-demethylubiquinol + A + H2O. The protein operates within cofactor biosynthesis; ubiquinone biosynthesis. Its function is as follows. Catalyzes the hydroxylation of 2-nonaprenyl-3-methyl-6-methoxy-1,4-benzoquinol during ubiquinone biosynthesis. The sequence is that of 3-demethoxyubiquinol 3-hydroxylase from Xanthomonas euvesicatoria pv. vesicatoria (strain 85-10) (Xanthomonas campestris pv. vesicatoria).